Reading from the N-terminus, the 174-residue chain is MNHDKSPIILIGFMGTGKSTIGKYVADEQNLSFIDIDSYIEEKYKLTIPEIFSKHGEQYFRNLEFTCLQECINTADIIATGGGIIESEEVFNFLKNQKNIIWLDCNIDIIYSRINDDPHRPNANNKTIKQLNDLYCSRILRYNEIAFKKFDSHLLSISEIYYELLNLIKASDQY.

An ATP-binding site is contributed by 15–20; that stretch reads GTGKST. Serine 19 is a binding site for Mg(2+). Residues aspartate 37, arginine 61, and glycine 82 each contribute to the substrate site. Arginine 120 is an ATP binding site. Arginine 138 is a substrate binding site.

The protein belongs to the shikimate kinase family. As to quaternary structure, monomer. The cofactor is Mg(2+).

The protein localises to the cytoplasm. The enzyme catalyses shikimate + ATP = 3-phosphoshikimate + ADP + H(+). Its pathway is metabolic intermediate biosynthesis; chorismate biosynthesis; chorismate from D-erythrose 4-phosphate and phosphoenolpyruvate: step 5/7. Its function is as follows. Catalyzes the specific phosphorylation of the 3-hydroxyl group of shikimic acid using ATP as a cosubstrate. The sequence is that of Shikimate kinase from Staphylococcus aureus (strain MRSA252).